We begin with the raw amino-acid sequence, 302 residues long: Zygote arrest protein 2.S (302 aa).

Disordered regions lie at residues 15–46 (YGGNFGQNPHRPQAFPKNKQAAWKSNKSSEPP), 88–117 (VDTGVQCSLGPRTLRRPPPPPSSPVKPTDC), and 138–195 (LPQG…EPNK). The span at 159–178 (LKDRGPSPEEKEPETKEALE) shows a compositional bias: basic and acidic residues. The 3CxxC-type zinc finger occupies 203-288 (QKYGYFHCKD…QELCGRCKNK (86 aa)).

Belongs to the ZAR1 family. In terms of tissue distribution, oocyte-specific.

It localises to the cytoplasm. Its subcellular location is the cytoplasmic ribonucleoprotein granule. Functionally, mRNA-binding protein required for maternal mRNA storage, translation and degradation during oocyte maturation. Probably promotes formation of some phase-separated membraneless compartment that stores maternal mRNAs in oocytes: acts by undergoing liquid-liquid phase separation upon binding to maternal mRNAs. Binds to the 3'-UTR of maternal mRNAs, inhibiting their translation. The sequence is that of Zygote arrest protein 2.S from Xenopus laevis (African clawed frog).